Reading from the N-terminus, the 69-residue chain is Large ribosomal subunit protein bL31 (69 aa).

Zn(2+) contacts are provided by cysteine 17, cysteine 19, cysteine 37, and cysteine 40.

It belongs to the bacterial ribosomal protein bL31 family. Type A subfamily. In terms of assembly, part of the 50S ribosomal subunit. Zn(2+) is required as a cofactor.

Functionally, binds the 23S rRNA. The polypeptide is Large ribosomal subunit protein bL31 (Clostridium novyi (strain NT)).